We begin with the raw amino-acid sequence, 1041 residues long: Desmoglein-4 (1041 aa).

The N-terminal stretch at 1–23 is a signal peptide; sequence MDWLLFRNICLLILFMVVLGVNS. Residues 24 to 49 constitute a propeptide that is removed on maturation; sequence EFIVEVKELDIENGTTTWQTVRRQKR. Cadherin domains are found at residues 50–157, 158–269, 270–385, and 389–497; these read EWIK…PPVF, TQNV…FPIL, EKTS…GPTF, and SMTF…CPVI. Residues 50 to 634 are Extracellular-facing; it reads EWIKFAAACR…RQSNVGLGPA (585 aa). A glycan (N-linked (GlcNAc...) asparagine) is linked at N110. N545 carries N-linked (GlcNAc...) asparagine glycosylation. A helical transmembrane segment spans residues 635–655; it reads GIGMIILGLLLLLLSPLLLLM. Residues 656-1041 lie on the Cytoplasmic side of the membrane; the sequence is CCCKRRQPEG…RYSNMHYSRQ (386 aa). Desmoglein repeat repeat units lie at residues 884–910 and 911–941; these read TLSE…IVTE and TYTT…ETVM. Residues 1014–1041 are disordered; that stretch reads ISQTTGSTSPMTSQHRVTRYSNMHYSRQ.

Interacts with JUP. In terms of tissue distribution, strongly expressed in the skin; during the anagen stage of hair follicles in the matrix, precortex and inner rooth sheath.

Its subcellular location is the cell membrane. It is found in the cell junction. The protein localises to the desmosome. Its function is as follows. A component of desmosome cell-cell junctions which are required for positive regulation of cellular adhesion. Coordinates the transition from proliferation to differentiation in hair follicle keratinocytes. Plays a role in moderating lymphocyte migration to inflamed skin and maintaining homeostasis of the epidermal inflammatory response. This chain is Desmoglein-4 (Dsg4), found in Mus musculus (Mouse).